A 211-amino-acid polypeptide reads, in one-letter code: Metalloproteinase inhibitor 3 (211 aa).

Residues 1–23 form the signal peptide; sequence MTPWLGLIVLLGSWSLGDWGAEA. C24 serves as a coordination point for Zn(2+). Involved in metalloproteinase-binding stretches follow at residues 24-27 and 88-89; these read CTCS and ES. Intrachain disulfides connect C24-C91, C26-C118, C36-C143, C145-C192, C150-C155, and C163-C184. The NTR domain occupies 24–143; that stretch reads CTCSPSHPQD…GLNYRYHLGC (120 aa). A mediates interaction with EFEMP1 region spans residues 105–188; sequence TGRVYDGKMY…SKHYACIRQK (84 aa). A glycan (N-linked (GlcNAc...) asparagine) is linked at N207.

This sequence belongs to the protease inhibitor I35 (TIMP) family. Interacts with EFEMP1. Interacts with KDR.

The protein resides in the secreted. Its subcellular location is the extracellular space. It is found in the extracellular matrix. Functionally, mediates a variety of processes including matrix regulation and turnover, inflammation, and angiogenesis, through reversible inhibition of zinc protease superfamily enzymes, primarily matrix metalloproteinases (MMPs). Regulates extracellular matrix (ECM) remodeling through inhibition of matrix metalloproteinases (MMP) including MMP-1, MMP-2, MMP-3, MMP-7, MMP-9, MMP-13, MMP-14 and MMP-15. Additionally, modulates the processing of amyloid precursor protein (APP) and apolipoprotein E receptor ApoER2 by inhibiting two alpha-secretases ADAM10 and ADAM17. Functions as a tumor suppressor and a potent inhibitor of angiogenesis. Exerts its anti-angiogenic effect by directly interacting with vascular endothelial growth factor (VEGF) receptor-2/KDR, preventing its binding to the VEGFA ligand. Selectively induces apoptosis in angiogenic endothelial cells through a caspase-independent cell death pathway. Mechanistically, inhibits matrix-induced focal adhesion kinase PTK2 tyrosine phosphorylation and association with paxillin/PXN and disrupts the incorporation of ITGB3, PTK2 and PXN into focal adhesion contacts on the matrix. The protein is Metalloproteinase inhibitor 3 (TIMP3) of Macaca mulatta (Rhesus macaque).